The sequence spans 343 residues: Retroviral-like aspartic protease 1 (343 aa).

Residues 1–55 lie on the Cytoplasmic side of the membrane; sequence MGSPGASLGIKKALQSEQATALPASAPAVSQPTAPAPSCLPKAGQVIPTLLREAP. The propeptide occupies 1-190; sequence MGSPGASLGI…HLPKEIVFAN (190 aa). Residues 56 to 76 traverse the membrane as a helical segment; it reads FSSVIAPTLLCGFLFLAWVAA. Topologically, residues 77–343 are extracellular; sequence EVPEESSRMA…SEEGRQELSH (267 aa). Residues 207–288 enclose the Peptidase A2 domain; the sequence is VRFLVDSGAQ…AEEAIIGTDV (82 aa). Residue Asp-212 is part of the active site. The N-linked (GlcNAc...) asparagine glycan is linked to Asn-276. The propeptide occupies 327-343; sequence LIEEDPSSEEGRQELSH.

In terms of assembly, homodimer. Post-translationally, undergoes autocleavage which is necessary for activation of the protein. As to expression, expressed primarily in the granular layer of the epidermis and inner root sheath of hair follicles. In psoriatic skin, expressed throughout the stratum corneum. In ulcerated skin, expressed in the stratum granulosum of intact epidermis but almost absent from ulcerated regions. Expressed in differentiated areas of squamous cell carcinomas but not in undifferentiated tumors.

It is found in the membrane. Functionally, protease responsible for filaggrin processing, essential for the maintenance of a proper epidermis organization. In Homo sapiens (Human), this protein is Retroviral-like aspartic protease 1.